Here is a 137-residue protein sequence, read N- to C-terminus: Ribosome-binding factor A (137 aa).

The protein belongs to the RbfA family. As to quaternary structure, monomer. Binds 30S ribosomal subunits, but not 50S ribosomal subunits or 70S ribosomes.

It is found in the cytoplasm. Its function is as follows. One of several proteins that assist in the late maturation steps of the functional core of the 30S ribosomal subunit. Associates with free 30S ribosomal subunits (but not with 30S subunits that are part of 70S ribosomes or polysomes). Required for efficient processing of 16S rRNA. May interact with the 5'-terminal helix region of 16S rRNA. The chain is Ribosome-binding factor A from Rhodopseudomonas palustris (strain TIE-1).